The sequence spans 320 residues: Aspartate carbamoyltransferase catalytic subunit (320 aa).

Residues Arg70 and Thr71 each coordinate carbamoyl phosphate. Residue Lys98 participates in L-aspartate binding. Arg120, His149, and Gln152 together coordinate carbamoyl phosphate. Positions 182 and 237 each coordinate L-aspartate. The carbamoyl phosphate site is built by Gly278 and Pro279.

This sequence belongs to the aspartate/ornithine carbamoyltransferase superfamily. ATCase family. In terms of assembly, heterododecamer (2C3:3R2) of six catalytic PyrB chains organized as two trimers (C3), and six regulatory PyrI chains organized as three dimers (R2).

It catalyses the reaction carbamoyl phosphate + L-aspartate = N-carbamoyl-L-aspartate + phosphate + H(+). The protein operates within pyrimidine metabolism; UMP biosynthesis via de novo pathway; (S)-dihydroorotate from bicarbonate: step 2/3. Its function is as follows. Catalyzes the condensation of carbamoyl phosphate and aspartate to form carbamoyl aspartate and inorganic phosphate, the committed step in the de novo pyrimidine nucleotide biosynthesis pathway. This is Aspartate carbamoyltransferase catalytic subunit from Vesicomyosocius okutanii subsp. Calyptogena okutanii (strain HA).